The chain runs to 752 residues: Glutamate carboxypeptidase 2 (752 aa).

Over 1–19 (MWNAQQDSDSAEALGRRQR) the chain is Cytoplasmic. At Ser-10 the chain carries Phosphoserine. Residues 20–44 (WFCAGTLVLAFTGTFIIGFLFGWFI) traverse the membrane as a helical; Signal-anchor for type II membrane protein segment. The Extracellular portion of the chain corresponds to 45–752 (KPSNDSTSSV…AAAETLREVD (708 aa)). N-linked (GlcNAc...) asparagine glycans are attached at residues Asn-48, Asn-78, Asn-123, Asn-155, and Asn-197. 2 residues coordinate substrate: Arg-212 and Asn-259. The Ca(2+) site is built by Thr-271 and Tyr-274. Positions 276-589 (ANEYAYRHEF…QVRGAMVFEL (314 aa)) are NAALADase. An N-linked (GlcNAc...) asparagine glycan is attached at Asn-338. The Zn(2+) site is built by His-379 and Asp-389. Glu-426 is a binding site for substrate. Glu-426 serves as the catalytic Nucleophile; for NAALADase activity. Glu-427 serves as a coordination point for Zn(2+). Ca(2+) contacts are provided by Glu-435 and Glu-438. Residue Asp-455 participates in Zn(2+) binding. N-linked (GlcNAc...) asparagine glycans are attached at residues Asn-461 and Asn-478. Substrate-binding positions include 519–520 (SG), Asn-521, 536–538 (RAR), Tyr-554, and 554–555 (YH). His-555 is a binding site for Zn(2+). N-linked (GlcNAc...) asparagine glycosylation is present at Asn-615. Residue Ser-630 is the Charge relay system of the active site. Asn-640 carries an N-linked (GlcNAc...) asparagine glycan. Residues Asp-668 and His-691 each act as charge relay system in the active site. Position 701–702 (701–702 (KY)) interacts with substrate.

The protein belongs to the peptidase M28 family. M28B subfamily. As to quaternary structure, homodimer. The cofactor is Zn(2+). As to expression, widely expressed throughout brain regions with highest levels in the hippocampus, dentate gyrus, priform cortex, choroid plexus of ventricles, pineal gland, anterior lobe of the pituitary gland and supraoptic nucleus. High levels also found in the cerebral cortex, substantia nigra, pontine nucleus and the granule cell layer of cerebellum. Highly expressed in astrocytes and non-myelinating Schwann cells. Also expressed in kidney, localizing to the proximal brush border of the renal tube.

It is found in the cell membrane. It catalyses the reaction Release of an unsubstituted, C-terminal glutamyl residue, typically from Ac-Asp-Glu or folylpoly-gamma-glutamates.. The NAALADase activity is inhibited by beta-NAAG, quisqualic acid and 2-(phosphonomethyl)glutaric acid (PMG). In terms of biological role, has both folate hydrolase and N-acetylated-alpha-linked-acidic dipeptidase (NAALADase) activity. Has a preference for tri-alpha-glutamate peptides. In the intestine, required for the uptake of folate. In the brain, modulates excitatory neurotransmission through the hydrolysis of the neuropeptide, N-aceylaspartylglutamate (NAAG), thereby releasing glutamate. Its function is as follows. Also exhibits a dipeptidyl-peptidase IV type activity. In vitro, cleaves Gly-Pro-AMC. This Rattus norvegicus (Rat) protein is Glutamate carboxypeptidase 2 (Folh1).